The primary structure comprises 60 residues: UPF0291 protein CTC_01690.1 (60 aa).

The protein belongs to the UPF0291 family.

The protein localises to the cytoplasm. The sequence is that of UPF0291 protein CTC_01690.1 from Clostridium tetani (strain Massachusetts / E88).